Here is a 186-residue protein sequence, read N- to C-terminus: dCTP deaminase (186 aa).

107-112 is a binding site for dCTP; sequence KSTYAR. Glu133 acts as the Proton donor/acceptor in catalysis. The dCTP site is built by Gln152, Tyr166, and Gln176.

Belongs to the dCTP deaminase family. Homotrimer.

The enzyme catalyses dCTP + H2O + H(+) = dUTP + NH4(+). It functions in the pathway pyrimidine metabolism; dUMP biosynthesis; dUMP from dCTP (dUTP route): step 1/2. In terms of biological role, catalyzes the deamination of dCTP to dUTP. The chain is dCTP deaminase from Campylobacter curvus (strain 525.92).